We begin with the raw amino-acid sequence, 261 residues long: Small ribosomal subunit protein uS2 (261 aa).

The tract at residues 222–261 is disordered; the sequence is GKALREQDGEANEEQPISEEEKKEVLEEAMSEEDFEGDKE. Acidic residues-rich tracts occupy residues 230 to 239 and 248 to 261; these read GEANEEQPIS and EEAM…GDKE.

The protein belongs to the universal ribosomal protein uS2 family.

The protein is Small ribosomal subunit protein uS2 of Campylobacter lari (strain RM2100 / D67 / ATCC BAA-1060).